Consider the following 206-residue polypeptide: Ras-related protein Rab-18 (206 aa).

Methionine 1 bears the N-acetylmethionine mark. Residues serine 17, glycine 20, lysine 21, serine 22, serine 23, aspartate 34, proline 35, threonine 40, glycine 66, lysine 123, and aspartate 125 each coordinate GTP. Residue serine 22 participates in Mg(2+) binding. Short sequence motifs (switch) lie at residues 31–45 (DTFD…GVDF) and 63–80 (DTAG…YYRG). Threonine 40 lines the Mg(2+) pocket. At serine 144 the chain carries Phosphoserine. Alanine 152 serves as a coordination point for GTP. Cysteine 199 carries the S-palmitoyl cysteine lipid modification. At cysteine 203 the chain carries Cysteine methyl ester. Cysteine 203 is lipidated: S-geranylgeranyl cysteine. Positions 204 to 206 (SVL) are cleaved as a propeptide — removed in mature form.

The protein belongs to the small GTPase superfamily. Rab family. Interacts (in GTP-bound form) with ZFYVE1. Interacts with ZW10 and this interaction is enhanced in the presence of ZFYVE1. Interacts with BSCL2. As to quaternary structure, (Microbial infection) Interacts with Hepatitis C virus (HCV) non-structural protein 5A; this interaction may promote the association of NS5A and other viral replicase components with lipid droplets. Mg(2+) is required as a cofactor. Ubiquitous.

It is found in the endoplasmic reticulum membrane. The protein localises to the golgi apparatus. It localises to the cis-Golgi network membrane. The protein resides in the lipid droplet. Its subcellular location is the apical cell membrane. The enzyme catalyses GTP + H2O = GDP + phosphate + H(+). Regulated by guanine nucleotide exchange factor (GEF) RAB3GAP1-RAB3GAP2 complex at the cis-Golgi membrane which promotes the exchange of bound GDP for free GTP. Regulated by GTPase activating protein (GAP) TBC1D20 at the ER membrane which increases the GTP hydrolysis activity. Inhibited by GDP dissociation inhibitors (GDIs) which prevent Rab-GDP dissociation. The small GTPases Rab are key regulators of intracellular membrane trafficking, from the formation of transport vesicles to their fusion with membranes. Rabs cycle between an inactive GDP-bound form and an active GTP-bound form that is able to recruit to membranes different sets of downstream effectors directly responsible for vesicle formation, movement, tethering and fusion. RAB18 is required for the localization of ZFYVE1 to lipid droplets and for its function in mediating the formation of endoplasmic reticulum-lipid droplets (ER-LD) contacts. Also required for maintaining endoplasmic reticulum structure. Plays a role in apical endocytosis/recycling. Plays a key role in eye and brain development and neurodegeneration. This is Ras-related protein Rab-18 from Homo sapiens (Human).